Reading from the N-terminus, the 190-residue chain is Protein hunchback (190 aa).

Disordered regions lie at residues 13–59 (EPMS…SSNL), 86–110 (AAMT…PNPM), and 142–190 (QTND…KYMA). A compositionally biased stretch (basic residues) spans 17-31 (HHHHHSHHHGHHHML). Positions 90-100 (PSPSNNDQNSP) are enriched in polar residues. A compositionally biased stretch (basic and acidic residues) spans 171–190 (EPEKDHDLISNSSEDMKYMA).

This sequence belongs to the hunchback C2H2-type zinc-finger protein family.

Its subcellular location is the nucleus. Gap class segmentation protein that controls development of head structures. The sequence is that of Protein hunchback (hb) from Scaptomyza crassifemur (Fruit fly).